A 148-amino-acid chain; its full sequence is Ribosome maturation factor RimP (148 aa).

The protein belongs to the RimP family.

The protein resides in the cytoplasm. Required for maturation of 30S ribosomal subunits. This is Ribosome maturation factor RimP from Thermosipho africanus (strain TCF52B).